Consider the following 302-residue polypeptide: Aspartate carbamoyltransferase catalytic subunit (302 aa).

Residues Arg-53 and Thr-54 each coordinate carbamoyl phosphate. An L-aspartate-binding site is contributed by Lys-82. Residues Arg-103, His-131, and Gln-134 each coordinate carbamoyl phosphate. L-aspartate is bound by residues Arg-164 and Arg-223. Positions 260 and 261 each coordinate carbamoyl phosphate.

The protein belongs to the aspartate/ornithine carbamoyltransferase superfamily. ATCase family. In terms of assembly, heterooligomer of catalytic and regulatory chains.

The catalysed reaction is carbamoyl phosphate + L-aspartate = N-carbamoyl-L-aspartate + phosphate + H(+). It participates in pyrimidine metabolism; UMP biosynthesis via de novo pathway; (S)-dihydroorotate from bicarbonate: step 2/3. Its function is as follows. Catalyzes the condensation of carbamoyl phosphate and aspartate to form carbamoyl aspartate and inorganic phosphate, the committed step in the de novo pyrimidine nucleotide biosynthesis pathway. In Methanococcus maripaludis (strain C5 / ATCC BAA-1333), this protein is Aspartate carbamoyltransferase catalytic subunit.